The primary structure comprises 546 residues: Probable protein kinase UbiB (546 aa).

The Protein kinase domain maps to 124-502 (DFSVEPLASA…HVRQGQSRYL (379 aa)). ATP contacts are provided by residues 130–138 (LASASIAQV) and Lys153. The active-site Proton acceptor is Asp288. The next 2 membrane-spanning stretches (helical) occupy residues 501 to 521 (YLFG…IHRP) and 522 to 542 (EWGM…LIGW).

It belongs to the ABC1 family. UbiB subfamily.

Its subcellular location is the cell inner membrane. The protein operates within cofactor biosynthesis; ubiquinone biosynthesis [regulation]. Functionally, is probably a protein kinase regulator of UbiI activity which is involved in aerobic coenzyme Q (ubiquinone) biosynthesis. The chain is Probable protein kinase UbiB from Klebsiella pneumoniae (strain 342).